The primary structure comprises 402 residues: CCA-adding enzyme (402 aa).

The ATP site is built by Gly32 and Arg35. CTP contacts are provided by Gly32 and Arg35. Residues Asp45 and Asp47 each coordinate Mg(2+). ATP contacts are provided by Arg119, Asp162, Arg165, Arg168, and Arg171. Residues Arg119, Asp162, Arg165, Arg168, and Arg171 each coordinate CTP.

It belongs to the tRNA nucleotidyltransferase/poly(A) polymerase family. Bacterial CCA-adding enzyme type 3 subfamily. As to quaternary structure, homodimer. Mg(2+) is required as a cofactor.

The enzyme catalyses a tRNA precursor + 2 CTP + ATP = a tRNA with a 3' CCA end + 3 diphosphate. The catalysed reaction is a tRNA with a 3' CCA end + 2 CTP + ATP = a tRNA with a 3' CCACCA end + 3 diphosphate. Functionally, catalyzes the addition and repair of the essential 3'-terminal CCA sequence in tRNAs without using a nucleic acid template. Adds these three nucleotides in the order of C, C, and A to the tRNA nucleotide-73, using CTP and ATP as substrates and producing inorganic pyrophosphate. tRNA 3'-terminal CCA addition is required both for tRNA processing and repair. Also involved in tRNA surveillance by mediating tandem CCA addition to generate a CCACCA at the 3' terminus of unstable tRNAs. While stable tRNAs receive only 3'-terminal CCA, unstable tRNAs are marked with CCACCA and rapidly degraded. The chain is CCA-adding enzyme from Lactococcus lactis subsp. cremoris (strain SK11).